Consider the following 24-residue polypeptide: Homotarsinin (24 aa).

Arg24 is modified (arginine amide).

Homodimer; disulfide-linked. In terms of tissue distribution, expressed by the skin glands.

It is found in the secreted. Antimicrobial peptide. Active against Gram-negative bacteria E.coli ATCC 25922 (MIC=1.5 uM) and P.aeruginosa ATTC 27853 (MIC=23.2 uM) and against Gram-positive bacterium S.aureus ATCC 29313 (MIC=11.6 uM). Has no hemolytic activity. Associates with and disrupts membranes in vitro. In Phyllomedusa tarsius (Brownbelly leaf frog), this protein is Homotarsinin.